A 420-amino-acid polypeptide reads, in one-letter code: Gamma-glutamyl phosphate reductase (420 aa).

The protein belongs to the gamma-glutamyl phosphate reductase family.

Its subcellular location is the cytoplasm. The enzyme catalyses L-glutamate 5-semialdehyde + phosphate + NADP(+) = L-glutamyl 5-phosphate + NADPH + H(+). It participates in amino-acid biosynthesis; L-proline biosynthesis; L-glutamate 5-semialdehyde from L-glutamate: step 2/2. In terms of biological role, catalyzes the NADPH-dependent reduction of L-glutamate 5-phosphate into L-glutamate 5-semialdehyde and phosphate. The product spontaneously undergoes cyclization to form 1-pyrroline-5-carboxylate. The polypeptide is Gamma-glutamyl phosphate reductase (Streptococcus pneumoniae (strain 70585)).